A 567-amino-acid polypeptide reads, in one-letter code: Thiol:disulfide interchange protein DsbD (567 aa).

A signal peptide spans 1–19; it reads MAQRIFTLILLLCSTSAFA. Intrachain disulfides connect C122-C128 and C185-C307. 7 helical membrane passes run 170–192, 212–234, 246–268, 297–319, 326–348, 358–380, and 387–409; these read ALWA…MYPL, LAFI…VAAA, YVLI…LFTL, GAIA…LLYI, WLGG…LVTV, GPWM…VFLL, and AWGL…ITSL. Residues 435–567 enclose the Thioredoxin domain; the sequence is QDWAFGSPSA…FSAHLHDRQP (133 aa). C482 and C485 form a disulfide bridge.

It belongs to the thioredoxin family. DsbD subfamily.

Its subcellular location is the cell inner membrane. It catalyses the reaction [protein]-dithiol + NAD(+) = [protein]-disulfide + NADH + H(+). It carries out the reaction [protein]-dithiol + NADP(+) = [protein]-disulfide + NADPH + H(+). In terms of biological role, required to facilitate the formation of correct disulfide bonds in some periplasmic proteins and for the assembly of the periplasmic c-type cytochromes. Acts by transferring electrons from cytoplasmic thioredoxin to the periplasm. This transfer involves a cascade of disulfide bond formation and reduction steps. The protein is Thiol:disulfide interchange protein DsbD of Salmonella typhi.